Here is a 296-residue protein sequence, read N- to C-terminus: D-alanine--D-alanine ligase (296 aa).

The region spanning 103–293 (KEILMHYRMP…FDSFVKRIIE (191 aa)) is the ATP-grasp domain. 129–180 (ISFPVAVKPSSGGSSIATFKVKSIQELKHAYEEASKYGEVMIEQWVTGKEIT) contacts ATP. Mg(2+) is bound by residues Asp247, Glu260, and Asn262.

This sequence belongs to the D-alanine--D-alanine ligase family. Requires Mg(2+) as cofactor. Mn(2+) is required as a cofactor.

Its subcellular location is the cytoplasm. It carries out the reaction 2 D-alanine + ATP = D-alanyl-D-alanine + ADP + phosphate + H(+). It functions in the pathway cell wall biogenesis; peptidoglycan biosynthesis. Its function is as follows. Cell wall formation. The chain is D-alanine--D-alanine ligase from Francisella tularensis subsp. tularensis (strain WY96-3418).